The chain runs to 272 residues: AA9 family lytic polysaccharide monooxygenase G (272 aa).

An N-terminal signal peptide occupies residues Met1–Ala22. His23 is a binding site for Cu(2+). N-linked (GlcNAc...) asparagine glycosylation occurs at Asn60. 2 cysteine pairs are disulfide-bonded: Cys78-Cys202 and Cys121-Cys125. His110 contacts Cu(2+). Positions 188 and 197 each coordinate O2. Tyr199 contacts Cu(2+).

Belongs to the polysaccharide monooxygenase AA9 family. Cu(2+) serves as cofactor.

It localises to the secreted. It carries out the reaction [(1-&gt;4)-beta-D-glucosyl]n+m + reduced acceptor + O2 = 4-dehydro-beta-D-glucosyl-[(1-&gt;4)-beta-D-glucosyl]n-1 + [(1-&gt;4)-beta-D-glucosyl]m + acceptor + H2O.. Its function is as follows. Lytic polysaccharide monooxygenase (LPMO) that depolymerizes crystalline and amorphous polysaccharides via the oxidation of scissile alpha- or beta-(1-4)-glycosidic bonds, yielding C1 or C4 oxidation products. Catalysis by LPMOs requires the reduction of the active-site copper from Cu(II) to Cu(I) by a reducing agent and H(2)O(2) or O(2) as a cosubstrate. Acts preferentially on crystalline regions of cellulose such as highly crystalline algae cellulose. The protein is AA9 family lytic polysaccharide monooxygenase G of Emericella nidulans (strain FGSC A4 / ATCC 38163 / CBS 112.46 / NRRL 194 / M139) (Aspergillus nidulans).